We begin with the raw amino-acid sequence, 394 residues long: 3-ketosteroid-9-alpha-monooxygenase, oxygenase component (394 aa).

The Rieske domain occupies 27 to 129; the sequence is WHCLGLAKDF…TLDQDGLLFV (103 aa). Residues Cys-68, His-70, Cys-87, and His-90 each coordinate [2Fe-2S] cluster. Residues Asn-175, His-181, and His-186 each contribute to the Fe cation site. Tyr-245 contacts substrate. Asp-305 lines the Fe cation pocket.

Homotrimer. The two-component system 3-ketosteroid-9-alpha-monooxygenase is composed of an oxygenase component KshA and a reductase component KshB. [2Fe-2S] cluster serves as cofactor. Fe cation is required as a cofactor.

It catalyses the reaction androsta-1,4-diene-3,17-dione + 2 reduced [2Fe-2S]-[ferredoxin] + O2 + 2 H(+) = 9alpha-hydroxyandrosta-1,4-diene-3,17-dione + 2 oxidized [2Fe-2S]-[ferredoxin] + H2O. May be involved in the degradation of cholic acid, a steroid acid found predominantly in the bile. In vitro, catalyzes the introduction of a 9alpha-hydroxyl moiety into the ring B of 3-ketosteroid substrates such as 1,4-androstadiene-3,17-dione (ADD), 4-androstene-3,17-dione (AD), 4-androstene-17beta-ol-3-one (testosterone), 4-pregnene-3,20-dione (progesterone), 3-oxo-23,24-bisnorcholesta-4-en-22-oate (4-BNC), 23,24-bisnorcholesta-4-ene-22-oate, 3-oxo-23,24-bisnorcholaesta-1,4-dien-22-oate (1,4-BNC), 23,24-bisnorcholesta-1,4-diene-22-oate and 3-oxo-23,24-bisnorcholesta-1,4-dien-22-oyl-coenzyme A thioester (1,4-BNC-CoA). KshA1 has the highest specificity for steroids possessing an isopropionyl side chain at C17. In Rhodococcus rhodochrous, this protein is 3-ketosteroid-9-alpha-monooxygenase, oxygenase component.